A 76-amino-acid chain; its full sequence is Exodeoxyribonuclease 7 small subunit (76 aa).

Belongs to the XseB family. As to quaternary structure, heterooligomer composed of large and small subunits.

Its subcellular location is the cytoplasm. The catalysed reaction is Exonucleolytic cleavage in either 5'- to 3'- or 3'- to 5'-direction to yield nucleoside 5'-phosphates.. Functionally, bidirectionally degrades single-stranded DNA into large acid-insoluble oligonucleotides, which are then degraded further into small acid-soluble oligonucleotides. The sequence is that of Exodeoxyribonuclease 7 small subunit from Staphylococcus epidermidis (strain ATCC 35984 / DSM 28319 / BCRC 17069 / CCUG 31568 / BM 3577 / RP62A).